The sequence spans 99 residues: DNA-directed RNA polymerase subunit omega (99 aa).

This sequence belongs to the RNA polymerase subunit omega family. As to quaternary structure, the RNAP catalytic core consists of 2 alpha, 1 beta, 1 beta' and 1 omega subunit. When a sigma factor is associated with the core the holoenzyme is formed, which can initiate transcription.

The catalysed reaction is RNA(n) + a ribonucleoside 5'-triphosphate = RNA(n+1) + diphosphate. In terms of biological role, promotes RNA polymerase assembly. Latches the N- and C-terminal regions of the beta' subunit thereby facilitating its interaction with the beta and alpha subunits. This is DNA-directed RNA polymerase subunit omega (rpoZ) from Xylella fastidiosa (strain 9a5c).